The following is a 205-amino-acid chain: MRGYFVVLEGIDGSGKTTQAKLLAEWFEEQGWDVLLTKEPTDTEFGRLIRELVLKNSIIDGSRISYEAEALLFAADRAEHVKKVILPALEKGKVVICDRYLYSSLAYQWARGLSLEWLMQINSFAPRPDLAILLDLPVKESIRRTKARGNMSEFDKLLELQRKVRMNYLKLAEMFKEMRIVNAMASVEEVHEDIVALVKHELLGL.

An ATP-binding site is contributed by 10–17 (GIDGSGKT).

The protein belongs to the thymidylate kinase family.

The catalysed reaction is dTMP + ATP = dTDP + ADP. In Pyrococcus abyssi (strain GE5 / Orsay), this protein is Probable thymidylate kinase (tmk).